The chain runs to 174 residues: MNPRRKSRLSVVLFIFLGISVASALVLYALRQNIDLFYTPTEVVNGKNNESHTKPSIGQRIRIGGMVVEGTVERDPKSLKVRFDLNDIGPSVTVIYEGILPDLFREGQGIVAQGVLIEPTVLNATEVLAKHDENYVPPELEAQMQKIHKPMGISDLKNESDRDRQEKQFKEGNQ.

Over 1 to 8 (MNPRRKSR) the chain is Cytoplasmic. A helical; Signal-anchor for type II membrane protein membrane pass occupies residues 9-29 (LSVVLFIFLGISVASALVLYA). Residues 30 to 174 (LRQNIDLFYT…QEKQFKEGNQ (145 aa)) are Periplasmic-facing. Heme-binding residues include His-131 and Tyr-135. The interval 149–174 (KPMGISDLKNESDRDRQEKQFKEGNQ) is disordered. Positions 156 to 174 (LKNESDRDRQEKQFKEGNQ) are enriched in basic and acidic residues.

Belongs to the CcmE/CycJ family.

Its subcellular location is the cell inner membrane. Heme chaperone required for the biogenesis of c-type cytochromes. Transiently binds heme delivered by CcmC and transfers the heme to apo-cytochromes in a process facilitated by CcmF and CcmH. The sequence is that of Cytochrome c-type biogenesis protein CcmE from Histophilus somni (strain 129Pt) (Haemophilus somnus).